A 693-amino-acid chain; its full sequence is Elongation factor G (693 aa).

Residues 9 to 283 (ERVRNIGIIA…AVCDYLPSPV (275 aa)) form the tr-type G domain. GTP contacts are provided by residues 18 to 25 (AHIDAGKT), 82 to 86 (DTPGH), and 136 to 139 (NKMD).

It belongs to the TRAFAC class translation factor GTPase superfamily. Classic translation factor GTPase family. EF-G/EF-2 subfamily.

The protein localises to the cytoplasm. Functionally, catalyzes the GTP-dependent ribosomal translocation step during translation elongation. During this step, the ribosome changes from the pre-translocational (PRE) to the post-translocational (POST) state as the newly formed A-site-bound peptidyl-tRNA and P-site-bound deacylated tRNA move to the P and E sites, respectively. Catalyzes the coordinated movement of the two tRNA molecules, the mRNA and conformational changes in the ribosome. This Dehalococcoides mccartyi (strain ATCC BAA-2266 / KCTC 15142 / 195) (Dehalococcoides ethenogenes (strain 195)) protein is Elongation factor G.